The following is a 386-amino-acid chain: Caspase-12 (386 aa).

The CARD domain maps to 1–91 (MAGKRQSQDP…LLSLKSHAEN (91 aa)). Ser-84 bears the Phosphoserine mark. Catalysis depends on residues His-218 and Cys-266.

This sequence belongs to the peptidase C14A family. Heterotetramer that consists of two anti-parallel arranged heterodimers, each one formed by two subunits (Potential). May interact with TRAF2.

In terms of biological role, involved in the activation cascade of caspases responsible for apoptosis execution. The sequence is that of Caspase-12 from Canis lupus familiaris (Dog).